The sequence spans 241 residues: Phosducin-like protein 2 (241 aa).

Residues 34 to 202 (VLRLQKEAMV…EWKLAEVGAI (169 aa)) form the Phosducin domain. Residues 89–241 (FGELREISGN…DSSNSDNDTK (153 aa)) are thioredoxin fold.

Belongs to the phosducin family. In terms of assembly, interacts with the CCT chaperonin complex and actin. Testis-specific.

It localises to the endoplasmic reticulum. Essential for male fertility, spermiogenesis and acrosome formation. This chain is Phosducin-like protein 2 (PDCL2), found in Homo sapiens (Human).